Consider the following 221-residue polypeptide: H-2 class II histocompatibility antigen, A-Q alpha chain (221 aa).

Positions 1–76 (GIVVYQSPGD…KRSNFTPATN (76 aa)) are alpha-1. At 1–183 (GIVVYQSPGD…IPAPMSELTE (183 aa)) the chain is on the extracellular side. Residues 77–170 (EAPQATVFPK…GLDEPVLKHW (94 aa)) are alpha-2. The 93-residue stretch at 79 to 171 (PQATVFPKSP…LDEPVLKHWE (93 aa)) folds into the Ig-like C1-type domain. C99 and C155 are joined by a disulfide. N-linked (GlcNAc...) asparagine glycosylation is present at N110. The segment at 171–183 (EPEIPAPMSELTE) is connecting peptide. Residues 184 to 209 (TVVCALGLSVGLVGIVVGTIFIIQGL) traverse the membrane as a helical segment. Topologically, residues 210 to 221 (RSGGTSRPPGPL) are cytoplasmic.

Belongs to the MHC class II family.

Its subcellular location is the membrane. This chain is H-2 class II histocompatibility antigen, A-Q alpha chain (H2-Aa), found in Mus musculus (Mouse).